The following is a 44-amino-acid chain: Hyaluronidase CdtHya1 (44 aa).

The protein belongs to the glycosyl hydrolase 56 family. In terms of assembly, monomer. In terms of processing, contains disulfide bonds. Post-translationally, glycosylated. Expressed by the venom gland.

It localises to the secreted. The catalysed reaction is Random hydrolysis of (1-&gt;4)-linkages between N-acetyl-beta-D-glucosamine and D-glucuronate residues in hyaluronate.. Its function is as follows. Snake venom endo-hyaluronidase that degrades hyaluronan to smaller oligosaccharide fragments. In venom, it is not toxic by itself, but increases the diffusion of other venom proteins such as crotoxin (a neurotoxic and myotoxic PLA2) by degrading the extracellular matrix. In addition, it displays antiedematogenic activity, since it significantly diminishes the oedematogenic activity of crotoxin (probably by direct substrate hydrolysis, since hyaluronan possesses strong water-binding capacity). The sequence is that of Hyaluronidase CdtHya1 from Crotalus durissus terrificus (South American rattlesnake).